Consider the following 480-residue polypeptide: Immune evasion protein OPG047 (480 aa).

Positions 10–90 constitute a BTB domain; sequence CKNILALSMT…SYTGKVYIDS (81 aa). In terms of domain architecture, BACK spans 125-223; the sequence is CVECYMMGIE…NYLSPRGINN (99 aa). Kelch repeat units follow at residues 273–319, 320–363, 365–408, 410–447, and 448–480; these read VVYL…PANN, KLYV…SINN, IYVM…VFGR, LFLV…IVDN, and KLLL…WDGK.

This sequence belongs to the orthopoxvirus OPG047 family.

Its function is as follows. Might have a role in the suppression of host immune response. This is Immune evasion protein OPG047 (OPG047) from Vaccinia virus (strain Copenhagen) (VACV).